The chain runs to 181 residues: Large ribosomal subunit protein uL5c (181 aa).

This sequence belongs to the universal ribosomal protein uL5 family. In terms of assembly, part of the 50S ribosomal subunit; contacts the 5S rRNA.

Its subcellular location is the plastid. The protein resides in the cyanelle. Functionally, binds 5S rRNA, forms part of the central protuberance of the 50S subunit. The chain is Large ribosomal subunit protein uL5c (rpl5) from Cyanophora paradoxa.